A 590-amino-acid chain; its full sequence is Plasmepsin V (590 aa).

The Lumenal segment spans residues 1 to 544; that stretch reads MNNYFLRKEN…EKENIFLKVS (544 aa). Residues 33 to 81 are a coiled coil; that stretch reads CNNVENKIDNVGKKIENVGKKIGDMENKNDNVENKNDNVGNKNDNVKNA. A Peptidase A1 domain is found at 100–514; that stretch reads YFLDIDIGKP…DLQQNQIAFI (415 aa). Residue aspartate 118 is part of the active site. 7 disulfides stabilise this stretch: cysteine 128–cysteine 211, cysteine 131–cysteine 134, cysteine 155–cysteine 166, cysteine 160–cysteine 171, cysteine 259–cysteine 518, cysteine 389–cysteine 434, and cysteine 443–cysteine 479. Over residues 282-291 the composition is skewed to basic and acidic residues; sequence KEKQKMDKSD. The interval 282-316 is disordered; it reads KEKQKMDKSDNNSSNKGNVSIKLKNNDKNDDEENN. Over residues 292–304 the composition is skewed to low complexity; that stretch reads NNSSNKGNVSIKL. Aspartate 365 is a catalytic residue. Residues 545–565 traverse the membrane as a helical segment; that stretch reads YINLYCLWLLLALTILLSLIL. Topologically, residues 566–590 are cytoplasmic; it reads YVRKMFYMDYFPLSDQNKSPIQEST.

Belongs to the peptidase A1 family. As to quaternary structure, component of a complex composed of SPC25 and PMV; the interaction is mediated via the transmembrane domains. The complex interacts with the SEC61 channel-forming translocon complex and is involved in the recognition and import of PEXEL motif-containing proteins into the ER for subsequent export. It is not clear if the zymogen has a cleavable propeptide. In vitro, appears to be cleaved between Asn-80 and Ala-81. Cleavage of the putative propeptide is dispensable for catalytic activity.

Its subcellular location is the endoplasmic reticulum membrane. Its activity is regulated as follows. Inhibited by peptidomimetic inhibitor WEHI-842. Inhibited by Cu(2+) and Hg(2+). Functionally, during the asexual blood stage, plays an essential role in the export of several proteins into the host erythrocytes by cleaving the pentameric localization motif RxLxE/Q/D (termed Plasmodium export element (PEXEL)) located downstream of the N-terminal secretory signal sequence. Specifically, cleaves after the leucine residue in the RxLxE/Q/D (or RxLxxE) motif of exported proteins including RESA, EMP2, EMP3, KAHRP, RIF/Rifin and STEVOR. Also, by regulating protein export, plays an essential role in gametocyte development and thus, parasite transmission to the mosquito vector. This chain is Plasmepsin V, found in Plasmodium falciparum (isolate 3D7).